We begin with the raw amino-acid sequence, 1386 residues long: DNA-directed RNA polymerase subunit beta (1386 aa).

The protein belongs to the RNA polymerase beta chain family. In plastids the minimal PEP RNA polymerase catalytic core is composed of four subunits: alpha, beta, beta', and beta''. When a (nuclear-encoded) sigma factor is associated with the core the holoenzyme is formed, which can initiate transcription.

The protein localises to the plastid. It is found in the chloroplast. It catalyses the reaction RNA(n) + a ribonucleoside 5'-triphosphate = RNA(n+1) + diphosphate. Functionally, DNA-dependent RNA polymerase catalyzes the transcription of DNA into RNA using the four ribonucleoside triphosphates as substrates. The chain is DNA-directed RNA polymerase subunit beta from Thalassiosira pseudonana (Marine diatom).